Consider the following 424-residue polypeptide: Serine--tRNA ligase (424 aa).

Position 232–234 (232–234) interacts with L-serine; that stretch reads TAE. 263 to 265 contacts ATP; it reads RQE. Residue Glu286 participates in L-serine binding. 350-353 is an ATP binding site; that stretch reads EIGS. L-serine is bound at residue Ser386.

This sequence belongs to the class-II aminoacyl-tRNA synthetase family. Type-1 seryl-tRNA synthetase subfamily. Homodimer. The tRNA molecule binds across the dimer.

It is found in the cytoplasm. It carries out the reaction tRNA(Ser) + L-serine + ATP = L-seryl-tRNA(Ser) + AMP + diphosphate + H(+). It catalyses the reaction tRNA(Sec) + L-serine + ATP = L-seryl-tRNA(Sec) + AMP + diphosphate + H(+). The protein operates within aminoacyl-tRNA biosynthesis; selenocysteinyl-tRNA(Sec) biosynthesis; L-seryl-tRNA(Sec) from L-serine and tRNA(Sec): step 1/1. Catalyzes the attachment of serine to tRNA(Ser). Is also able to aminoacylate tRNA(Sec) with serine, to form the misacylated tRNA L-seryl-tRNA(Sec), which will be further converted into selenocysteinyl-tRNA(Sec). The sequence is that of Serine--tRNA ligase from Onion yellows phytoplasma (strain OY-M).